We begin with the raw amino-acid sequence, 152 residues long: Protein-export protein SecB (152 aa).

It belongs to the SecB family. In terms of assembly, homotetramer, a dimer of dimers. One homotetramer interacts with 1 SecA dimer.

The protein resides in the cytoplasm. Its function is as follows. One of the proteins required for the normal export of preproteins out of the cell cytoplasm. It is a molecular chaperone that binds to a subset of precursor proteins, maintaining them in a translocation-competent state. It also specifically binds to its receptor SecA. The protein is Protein-export protein SecB of Rickettsia akari (strain Hartford).